Consider the following 131-residue polypeptide: Global transcriptional regulator Spx (131 aa).

A disulfide bond links Cys10 and Cys13.

Belongs to the ArsC family. Spx subfamily. As to quaternary structure, interacts with the C-terminal domain of the alpha subunit of the RNAP.

The protein localises to the cytoplasm. In terms of biological role, global transcriptional regulator that plays a key role in stress response and exerts either positive or negative regulation of genes. Acts by interacting with the C-terminal domain of the alpha subunit of the RNA polymerase (RNAP). This interaction can enhance binding of RNAP to the promoter region of target genes and stimulate their transcription, or block interaction of RNAP with activator. This chain is Global transcriptional regulator Spx, found in Shouchella clausii (strain KSM-K16) (Alkalihalobacillus clausii).